A 350-amino-acid polypeptide reads, in one-letter code: 3-methylornithine synthase (350 aa).

Positions 57–279 constitute a Radical SAM core domain; it reads NRVFLNCFIY…PKRLIPASLD (223 aa). C71 and C75 together coordinate [4Fe-4S] cluster. An S-adenosyl-L-methionine-binding site is contributed by F77. C78 is a binding site for [4Fe-4S] cluster. D112, S146, and Y169 together coordinate (3R)-3-methyl-D-ornithine. Positions 171, 182, and 190 each coordinate S-adenosyl-L-methionine. Residue R235 participates in (3R)-3-methyl-D-ornithine binding. 2 residues coordinate S-adenosyl-L-methionine: L240 and Q242. Residues S277, T298, and S299 each coordinate (3R)-3-methyl-D-ornithine.

The protein belongs to the radical SAM superfamily. PylB family. The cofactor is [4Fe-4S] cluster. It depends on S-adenosyl-L-methionine as a cofactor.

The catalysed reaction is L-lysine = (3R)-3-methyl-D-ornithine. Its pathway is amino-acid biosynthesis; L-pyrrolysine biosynthesis. In terms of biological role, catalyzes the isomerization of L-lysine to (3R)-3-methyl-D-ornithine via a radical-based mechanism, a step in the biosynthesis pathway of pyrrolysine. Also catalyzes the reverse reaction in vitro, converting (3R)-3-methyl-D-ornithine into L-lysine. This chain is 3-methylornithine synthase, found in Methanosarcina barkeri (strain Fusaro / DSM 804).